A 199-amino-acid polypeptide reads, in one-letter code: Nuclear protein UL4 (199 aa).

Belongs to the alphaherpesvirinae HHV-1 UL4 family.

Its subcellular location is the host nucleus. The sequence is that of Nuclear protein UL4 from Homo sapiens (Human).